Here is a 355-residue protein sequence, read N- to C-terminus: Protein ATP1B4 (355 aa).

Over 1-108 the chain is Nuclear; sequence MRRQLRSRRA…SLARTGQSLS (108 aa). The disordered stretch occupies residues 35 to 76; sequence EEEEAEEARVMVVPDLEEEEKEEEEEKEEDEKEEEESHHQDT. Residues 49–68 show a composition bias toward acidic residues; sequence DLEEEEKEEEEEKEEDEKEE. The helical; Signal-anchor for type II membrane protein transmembrane segment at 109–129 threads the bilayer; sequence LLLVIYFFFYASLAAVITLCM. Residues 130-355 lie on the Perinuclear space side of the membrane; that stretch reads YTLFLTISPY…RVIFTLNIET (226 aa).

This sequence belongs to the X(+)/potassium ATPases subunit beta family. As to quaternary structure, associates with a SMAD7-transcriptional complex. Interacts with SNW1 and TOR1AIP1. Does not associate with known Na,K-ATPase alpha-subunits. As to expression, expressed in skeletal muscle (at protein level). Expressed during postnatal development in skeletal muscle and heart.

The protein resides in the nucleus inner membrane. In terms of biological role, may act as a transcriptional coregulator during muscle development through its interaction with SNW1. Has lost its ancestral function as a Na,K-ATPase beta-subunit. This is Protein ATP1B4 (ATP1B4) from Sus scrofa (Pig).